A 65-amino-acid chain; its full sequence is DNA-directed RNA polymerase subunit Rpo10 (65 aa).

Zn(2+) is bound by residues cysteine 7, cysteine 10, cysteine 44, and cysteine 45.

This sequence belongs to the archaeal Rpo10/eukaryotic RPB10 RNA polymerase subunit family. As to quaternary structure, part of the RNA polymerase complex. Requires Zn(2+) as cofactor.

It is found in the cytoplasm. It carries out the reaction RNA(n) + a ribonucleoside 5'-triphosphate = RNA(n+1) + diphosphate. Functionally, DNA-dependent RNA polymerase (RNAP) catalyzes the transcription of DNA into RNA using the four ribonucleoside triphosphates as substrates. This chain is DNA-directed RNA polymerase subunit Rpo10, found in Nanoarchaeum equitans (strain Kin4-M).